The chain runs to 623 residues: MAHVGGLWLHGCLALAVLVSLVHSQHVFMAPQQALSLLQRARRANSGFFEEMRKGNLERECVEEQCSREEAYEALESPSETDAFWAKYTACESVRKSREKLVECLEGNCAEGLGMNYRGNISVTRSGIECQLWRSRYPHKPEVNSTMYPGADLRENFCRNPDGSITGPWCYTTSPTVRREACSIPVCGQGRVTAELIPRSGGSTVNVSPPLETCVPERGRQYQGRLAVTSHGSPCLAWGSSQAKALSKDQDFNPAVPLVENFCRNPDGDQEGAWCYVAGQPGDFEYCDLDYCEEPVDEEVGDALGENADAAIEGRTTADDFQPFFNEKTFGAGEADCGLRPLFEKSSLEDKTEKELFESYIEGRIVEGSDAEIGLAPWQVMIFRKSPQELLCGASLISDRWVLTAAHCLLYPPWDKNFTENDLLVRIGKHSRTRYERNIEKISMLEKIYIHPRYNWRENLDRDIALLKLRKPITFSDYIHPVCLPDKETATKLLRAGYKGRVTGWGNLKETWTTSASEVQPSVLQVVNLPIVERLVCKASTRIRITDNMFCAGYKPDEGKRGDACEGDSGGPFVMKSPFNNRWYQMGIVSWGEGCDRDGKYGFYTHVFRLKKWMQKVIDRFGG.

Residues 1–24 (MAHVGGLWLHGCLALAVLVSLVHS) form the signal peptide. Positions 25–43 (QHVFMAPQQALSLLQRARR) are excised as a propeptide. Residues 44 to 90 (ANSGFFEEMRKGNLERECVEEQCSREEAYEALESPSETDAFWAKYTA) form the Gla domain. Residues E50, E51, E58, E60, E63, E64, E69, E70, E73, and E76 each carry the 4-carboxyglutamate modification. Cysteines 61 and 66 form a disulfide. Intrachain disulfides connect C91–C104, C109–C187, C130–C170, C158–C182, C214–C292, C235–C275, C263–C287, C337–C483, C392–C408, C537–C551, and C565–C595. Kringle domains follow at residues 108–187 (NCAE…IPVC) and 213–292 (TCVP…LDYC). N-linked (GlcNAc...) asparagine glycosylation is found at N120 and N144. In terms of domain architecture, Peptidase S1 spans 365–619 (IVEGSDAEIG…LKKWMQKVID (255 aa)). H407 acts as the Charge relay system in catalysis. N-linked (GlcNAc...) asparagine glycosylation occurs at N417. D463 serves as the catalytic Charge relay system. Positions 552 to 574 (AGYKPDEGKRGDACEGDSGGPFV) are high affinity receptor-binding region which is also known as the TP508 peptide. Catalysis depends on S569, which acts as the Charge relay system.

Belongs to the peptidase S1 family. In terms of assembly, heterodimer (named alpha-thrombin) of a light and a heavy chain; disulfide-linked. Forms a heterodimer with SERPINA5. In plasma, interacts (via N-terminus) with alpha-1-microglobulin; this interaction does not prevent the activation of prothrombin to thrombin. The gamma-carboxyglutamyl residues, which bind calcium ions, result from the carboxylation of glutamyl residues by a microsomal enzyme, the vitamin K-dependent carboxylase. The modified residues are necessary for the calcium-dependent interaction with a negatively charged phospholipid surface, which is essential for the conversion of prothrombin to thrombin. In terms of processing, in the penultimate step of the coagulation cascade, prothrombin is converted to thrombin by the prothrombinase complex composed of factor Xa (F10), cofactor Va (F5), and phospholipids. This activation requires factor Xa-catalyzed sequential cleavage at 2 sites, Arg-315 and Arg-364, along 2 possible pathways. In the first pathway, the first cleavage occurs at Arg-315, leading to the formation of the inactive intermediate prethrombin-2. This pathway preferentially occurs on platelets and in the absence of cofactor Va. In the second pathway, the first cleavage occurs at Arg-364, which separates protease domain into 2 chains that remain connected through a disulfide bond and generates the active intermediate meizothrombin. The presence of cofactor Va directs activation along the meizothrombin pathway and greatly accelerates the rate of cleavage at Arg-364, but has a smaller effect on the cleavage of meizothrombin at Arg-315. Meizothrombin accumulates as an intermediate when prothrombinase is assembled on the membrane of red blood cells.

It carries out the reaction Selective cleavage of Arg-|-Gly bonds in fibrinogen to form fibrin and release fibrinopeptides A and B.. Its activity is regulated as follows. Activity is promoted in the presence of negatively charged surfaces, such as polyphosphate and dextran sulfate. Inhibited by SERPINA5. Its function is as follows. Thrombin, which cleaves bonds after Arg and Lys, converts fibrinogen to fibrin and activates factors V, VII, VIII, XIII, and, in complex with thrombomodulin, protein C. Functions in blood homeostasis, inflammation and wound healing. Activates coagulation factor XI (F11); activation is promoted by the contact with negatively charged surfaces. Triggers the production of pro-inflammatory cytokines, such as MCP-1/CCL2 and IL8/CXCL8, in endothelial cells. The chain is Prothrombin (F2) from Sus scrofa (Pig).